The primary structure comprises 371 residues: Polygalacturonase (371 aa).

A signal peptide spans 1–19 (MPSYLRNLVWATLAAGLVS). A propeptide spanning residues 20–34 (AAPTPSRVSDLTKKS) is cleaved from the precursor. Cysteines 38 and 53 form a disulfide. PbH1 repeat units follow at residues 95 to 117 (GPLI…VINA), 165 to 195 (SDNL…DISE), 196 to 217 (STGV…AINS), 218 to 238 (GQNI…SIGS), 247 to 268 (VKNV…RIKT), 276 to 298 (VSDV…VIEQ), and 310 to 355 (TSGV…DITS). Aspartate 210 functions as the Proton donor in the catalytic mechanism. A disulfide bond links cysteine 212 and cysteine 228. Residue histidine 232 is part of the active site. N-linked (GlcNAc...) asparagine glycosylation is present at asparagine 249. 2 disulfide bridges follow: cysteine 338–cysteine 343 and cysteine 362–cysteine 371.

Belongs to the glycosyl hydrolase 28 family.

The protein resides in the secreted. It catalyses the reaction (1,4-alpha-D-galacturonosyl)n+m + H2O = (1,4-alpha-D-galacturonosyl)n + (1,4-alpha-D-galacturonosyl)m.. The sequence is that of Polygalacturonase from Penicillium janthinellum (Penicillium vitale).